The sequence spans 236 residues: Uridylate kinase (236 aa).

K10–G13 lines the ATP pocket. Residue G52 participates in UMP binding. ATP is bound by residues G53 and R57. UMP-binding positions include D72 and T133–T140. Residues T160, Y166, and D169 each contribute to the ATP site.

Belongs to the UMP kinase family. As to quaternary structure, homohexamer.

It localises to the cytoplasm. It catalyses the reaction UMP + ATP = UDP + ADP. The protein operates within pyrimidine metabolism; CTP biosynthesis via de novo pathway; UDP from UMP (UMPK route): step 1/1. Inhibited by UTP. Its function is as follows. Catalyzes the reversible phosphorylation of UMP to UDP. This chain is Uridylate kinase, found in Ralstonia nicotianae (strain ATCC BAA-1114 / GMI1000) (Ralstonia solanacearum).